Reading from the N-terminus, the 718-residue chain is Homeobox-leucine zipper protein HDG9 (718 aa).

Residues 1–12 (MDFTRDDNSSDE) show a composition bias toward basic and acidic residues. Positions 1–35 (MDFTRDDNSSDERENDVDANTNNRHEKKGYHRHTN) are disordered. Positions 26-85 (EKKGYHRHTNEQIHRLETYFKECPHPDEFQRRLLGEELNLKPKQIKFWFQNKRTQAKSHN) form a DNA-binding region, homeobox. Residues 78-152 (RTQAKSHNEK…LKDEYERVSN (75 aa)) are a coiled coil. Positions 169–209 (PYLHGPSNHASTSKNRPALYGTSSNRLPEPSSIFRGPYTRG) are disordered. The span at 176–194 (NHASTSKNRPALYGTSSNR) shows a compositional bias: polar residues. One can recognise an START domain in the interval 232 to 464 (SQLEKIAMLE…LERTCERLIF (233 aa)).

This sequence belongs to the HD-ZIP homeobox family. Class IV subfamily. Expressed in anthers with highest levels in the tapetum and pollen grains, and chalazal end of the embryo sac.

It localises to the nucleus. Functionally, probable transcription factor that binds to the DNA sequence 5'-GCATTAAATGCGCA-3'. This chain is Homeobox-leucine zipper protein HDG9 (HDG9), found in Arabidopsis thaliana (Mouse-ear cress).